Consider the following 637-residue polypeptide: Early transcription factor 70 kDa subunit (637 aa).

The Helicase ATP-binding domain maps to 32–185 (RTIIDENRSV…GHIIDLMSEE (154 aa)). 45–52 (HIMGSGKT) is a binding site for ATP. A DEXH box motif is present at residues 135-138 (DEAH). Residues 327–507 (KFKYFINRIQ…VLPFDIKKLL (181 aa)) form the Helicase C-terminal domain.

The protein belongs to the helicase family. VETF subfamily. In terms of assembly, heterodimer of a 70 kDa and a 82 kDa subunit. Part of the early transcription complex composed of ETF, RAP94/OPG109, and the DNA-directed RNA polymerase.

It localises to the virion. Its function is as follows. Acts with RNA polymerase to initiate transcription from early gene promoters. Is recruited by the RPO-associated protein of 94 kDa RAP94/OPG109 to form the early transcription complex, which also contains the core RNA polymerase. ETF heterodimer binds to early gene promoters. The protein is Early transcription factor 70 kDa subunit (OPG118) of Homo sapiens (Human).